Here is a 338-residue protein sequence, read N- to C-terminus: Lumican (338 aa).

A signal peptide spans 1–18 (MNVCTFTLVLALVGSVSG). Gln19 is subject to Pyrrolidone carboxylic acid. Residues Tyr20, Tyr21, Tyr23, and Tyr30 each carry the sulfotyrosine modification. An LRRNT domain is found at 28–66 (FMYGELSPNCAPECNCPHSYPTAMYCDDLKLKSVPMVPP). LRR repeat units follow at residues 67 to 88 (GIKY…AFEN), 91 to 114 (DLQW…VFSK), 117 to 137 (QLKK…PLPK), 138 to 159 (SLQD…DGLV), 160 to 181 (NLTF…ASLK), 185 to 205 (SLEY…GLPT), 206 to 227 (SLLT…YFNR), and 230 to 250 (GLQY…PGNS). A glycan (N-linked (GlcNAc...) (keratan sulfate) asparagine) is linked at Asn88. Asn127 carries an N-linked (GlcNAc...) (keratan sulfate) asparagine glycan. A glycan (N-linked (GlcNAc...) (keratan sulfate) asparagine) is linked at Asn160. The N-linked (GlcNAc...) (keratan sulfate) asparagine glycan is linked to Asn252. LRR repeat units follow at residues 255–276 (SLLE…NENL) and 277–296 (ENYY…SFCK). A disulfide bridge links Cys295 with Cys328. Ser304 carries the post-translational modification Phosphoserine. The stretch at 305–326 (KIKHLRLDGNPLTQSSLPPDMY) is one LRR 11 repeat.

This sequence belongs to the small leucine-rich proteoglycan (SLRP) family. SLRP class II subfamily. In terms of assembly, binds to laminin. Contains keratan sulfate.

Its subcellular location is the secreted. The protein localises to the extracellular space. It localises to the extracellular matrix. The polypeptide is Lumican (Lum) (Rattus norvegicus (Rat)).